Here is a 143-residue protein sequence, read N- to C-terminus: Mite group 2 allergen Pso o 2 (143 aa).

Positions 1 to 17 (MMKTLVVLAITLAVVSA) are cleaved as a signal peptide. Disulfide bonds link C25-C134, C38-C43, and C89-C94.

It belongs to the NPC2 family.

Its subcellular location is the secreted. In Psoroptes ovis (Sheep scab mite), this protein is Mite group 2 allergen Pso o 2 (ALLA).